A 271-amino-acid polypeptide reads, in one-letter code: Dermonecrotic toxin LhSicTox-alphaIA2aiv (271 aa).

The active site involves His3. Mg(2+)-binding residues include Glu23 and Asp25. His39 functions as the Nucleophile in the catalytic mechanism. Disulfide bonds link Cys43–Cys49 and Cys45–Cys188. Asp83 lines the Mg(2+) pocket.

This sequence belongs to the arthropod phospholipase D family. Class II subfamily. Mg(2+) serves as cofactor. As to expression, expressed by the venom gland.

It localises to the secreted. It carries out the reaction an N-(acyl)-sphingosylphosphocholine = an N-(acyl)-sphingosyl-1,3-cyclic phosphate + choline. It catalyses the reaction an N-(acyl)-sphingosylphosphoethanolamine = an N-(acyl)-sphingosyl-1,3-cyclic phosphate + ethanolamine. The catalysed reaction is a 1-acyl-sn-glycero-3-phosphocholine = a 1-acyl-sn-glycero-2,3-cyclic phosphate + choline. The enzyme catalyses a 1-acyl-sn-glycero-3-phosphoethanolamine = a 1-acyl-sn-glycero-2,3-cyclic phosphate + ethanolamine. Dermonecrotic toxins cleave the phosphodiester linkage between the phosphate and headgroup of certain phospholipids (sphingolipid and lysolipid substrates), forming an alcohol (often choline) and a cyclic phosphate. This toxin acts on sphingomyelin (SM). It may also act on ceramide phosphoethanolamine (CPE), lysophosphatidylcholine (LPC) and lysophosphatidylethanolamine (LPE), but not on lysophosphatidylserine (LPS), and lysophosphatidylglycerol (LPG). It acts by transphosphatidylation, releasing exclusively cyclic phosphate products as second products. Induces dermonecrosis, hemolysis, increased vascular permeability, edema, inflammatory response, and platelet aggregation. This chain is Dermonecrotic toxin LhSicTox-alphaIA2aiv, found in Loxosceles hirsuta (Recluse spider).